Consider the following 662-residue polypeptide: Pro-neuregulin-1, membrane-bound isoform (662 aa).

Residues 1 to 13 constitute a propeptide that is removed on maturation; the sequence is MSERKEGRGKGKG. The segment at 1–52 is disordered; it reads MSERKEGRGKGKGKKKDRGSRGKPGPAEGDPSPALPPRLKEMKSQESAAGSK. The Extracellular segment spans residues 14 to 265; it reads KKKDRGSRGK…SKAEELYQKR (252 aa). Residues 37–128 enclose the Ig-like C2-type domain; the sequence is PRLKEMKSQE…GNDSASANIT (92 aa). An intrachain disulfide couples Cys57 to Cys112. Asn120, Asn126, and Asn164 each carry an N-linked (GlcNAc...) asparagine glycan. One can recognise an EGF-like domain in the interval 178-222; that stretch reads HLIKCAEKEKTFCVNGGECFTVKDLSNPSRYLCKCPNEFTGDRCQ. Cystine bridges form between Cys182–Cys196, Cys190–Cys210, and Cys212–Cys221. A helical transmembrane segment spans residues 266 to 288; the sequence is VLTITGICIALLVVGIMCVVAYC. At 289–662 the chain is on the cytoplasmic side; that stretch reads KTKKQRQKLH…VIANQDPIAV (374 aa). Low complexity predominate over residues 358–373; sequence SHYTSTAHHSTTVTQT. Disordered regions lie at residues 358–383, 398–480, and 547–610; these read SHYT…NGHT, SVEN…PVSS, and YETT…DTPF. The segment covering 374–383 has biased composition (polar residues); it reads PSHSWSNGHT. Over residues 410-420 the composition is skewed to gly residues; that stretch reads GPRGRLHGLGG. Residues 425-445 are compositionally biased toward basic and acidic residues; it reads SFLRHARETPDSYRDSPHSER. Residues 564–574 show a composition bias toward basic residues; the sequence is TNSRRAKRTKP. The segment covering 585–596 has biased composition (low complexity); the sequence is DSNTSSVSSNSE.

The protein belongs to the neuregulin family. The cytoplasmic domain interacts with the LIM domain region of LIMK1. Forms a ternary complex with ERBB3 and ITGAV:ITGB3 or ITGA6:ITGB4. Interacts with NRDC and BACE1. In terms of processing, proteolytic cleavage close to the plasma membrane on the external face leads to the release of the soluble growth factor form. Post-translationally, N- and O-glycosylated. Extensive glycosylation precedes the proteolytic cleavage. In terms of tissue distribution, widely expressed. Most tissues contain isoform alpha2A and isoform alpha2B. Isoform Alpha2 and isoform beta2 are the predominant forms in mesenchymal and non-neuronal organs. Isoform Beta1 is enriched in brain and spinal cord, but not in muscle and heart. Isoform Alpha2C is highly expressed in spinal cord, moderately in lung, brain, ovary, and stomach, in low amounts in the kidney, skin and heart and not detected in the liver, spleen, and placenta.

It is found in the cell membrane. It localises to the secreted. Its function is as follows. Direct ligand for ERBB3 and ERBB4 tyrosine kinase receptors. Concomitantly recruits ERBB1 and ERBB2 coreceptors, resulting in ligand-stimulated tyrosine phosphorylation and activation of the ERBB receptors. The multiple isoforms perform diverse functions such as inducing growth and differentiation of epithelial, glial, neuronal, and skeletal muscle cells; inducing expression of acetylcholine receptor in synaptic vesicles during the formation of the neuromuscular junction; stimulating lobuloalveolar budding and milk production in the mammary gland and inducing differentiation of mammary tumor cells; stimulating Schwann cell proliferation; implication in the development of the myocardium such as trabeculation of the developing heart. Binds to ERBB4 and ERBB3. Acts as a ligand for integrins and binds (via EGF domain) to integrins ITGAV:ITGB3 or ITGA6:ITGB4. Its binding to integrins and subsequent ternary complex formation with integrins and ERRB3 are essential for NRG1-ERBB signaling. Induces the phosphorylation and activation of MAPK3/ERK1, MAPK1/ERK2 and AKT1, and ligand-dependent ERBB4 endocytosis is essential for the NRG1-mediated activation of these kinases in neurons. In Rattus norvegicus (Rat), this protein is Pro-neuregulin-1, membrane-bound isoform (Nrg1).